The following is a 389-amino-acid chain: Large envelope protein (389 aa).

Residue methionine 1 is modified to N-acetylmethionine. Glycine 2 carries the N-myristoyl glycine; by host lipid modification. Positions 2-108 (GQNLSTSNPL…PPLRDTHPQA (107 aa)) are pre-S1. A pre-S region spans residues 2 to 163 (GQNLSTSNPL…FSTTGDPAPN (162 aa)). Residues 2–170 (GQNLSTSNPL…APNMENITSG (169 aa)) are Virion surface; in external conformation-facing. Over 2 to 242 (GQNLSTSNPL…PGYRWMCLRR (241 aa)) the chain is Intravirion; in internal conformation. The tract at residues 75–107 (TTLPANPPPASTNRQSGRQPTPLSPPLRDTHPQ) is disordered. Residues 85–95 (STNRQSGRQPT) show a composition bias toward polar residues. The pre-S2 stretch occupies residues 109–163 (MQWNSTTFHQALQDPRVRGLYFPAGGSSSGTLNPVPNTASHISSVFSTTGDPAPN). The chain crosses the membrane as a helical span at residues 171–191 (FLGPLLVLQAGFFLLTKILTI). The Intravirion; in external conformation portion of the chain corresponds to 192-242 (PQSLDSWWTSLNFLGGAPVCLGQNSQSPTSNHSPTSCPPICPGYRWMCLRR). A helical membrane pass occupies residues 243–263 (FIIFLFILLLCLIFLLVLLDY). Residues 264-337 (QGMLPVCPLI…WASVRFSWLS (74 aa)) lie on the Virion surface side of the membrane. N-linked (GlcNAc...) asparagine; by host glycosylation is present at asparagine 309. A helical membrane pass occupies residues 338–358 (LLAPFVQWFAGLSPTVWLLAI). Topologically, residues 359–364 (WMMWYW) are intravirion. The helical transmembrane segment at 365–387 (GPNLYNILSPFIPLLPIFFCLWV) threads the bilayer. The Virion surface segment spans residues 388 to 389 (YI).

The protein belongs to the orthohepadnavirus major surface antigen family. As to quaternary structure, in its internal form (Li-HBsAg), interacts with the capsid protein and with the isoform S. Interacts with host chaperone CANX. In terms of assembly, associates with host chaperone CANX through its pre-S2 N glycan; this association may be essential for isoform M proper secretion. Interacts with isoform L. Interacts with the antigens of satellite virus HDV (HDVAgs); this interaction is required for encapsidation of HDV genomic RNA. Isoform M is N-terminally acetylated by host at a ratio of 90%, and N-glycosylated by host at the pre-S2 region. Post-translationally, myristoylated.

The protein localises to the virion membrane. Its function is as follows. The large envelope protein exists in two topological conformations, one which is termed 'external' or Le-HBsAg and the other 'internal' or Li-HBsAg. In its external conformation the protein attaches the virus to cell receptors and thereby initiating infection. This interaction determines the species specificity and liver tropism. This attachment induces virion internalization predominantly through caveolin-mediated endocytosis. The large envelope protein also assures fusion between virion membrane and endosomal membrane. In its internal conformation the protein plays a role in virion morphogenesis and mediates the contact with the nucleocapsid like a matrix protein. Functionally, the middle envelope protein plays an important role in the budding of the virion. It is involved in the induction of budding in a nucleocapsid independent way. In this process the majority of envelope proteins bud to form subviral lipoprotein particles of 22 nm of diameter that do not contain a nucleocapsid. This Pan troglodytes (Chimpanzee) protein is Large envelope protein.